Reading from the N-terminus, the 340-residue chain is L-threonine 3-dehydrogenase (340 aa).

Position 38 (Cys38) interacts with Zn(2+). Catalysis depends on charge relay system residues Thr40 and His43. Zn(2+)-binding residues include His63, Glu64, Cys93, Cys96, Cys99, and Cys107. Residues Ile175, Asp195, Arg200, 262 to 264, and 286 to 287 contribute to the NAD(+) site; these read LGI and IY.

This sequence belongs to the zinc-containing alcohol dehydrogenase family. As to quaternary structure, homotetramer. The cofactor is Zn(2+).

It localises to the cytoplasm. The enzyme catalyses L-threonine + NAD(+) = (2S)-2-amino-3-oxobutanoate + NADH + H(+). It functions in the pathway amino-acid degradation; L-threonine degradation via oxydo-reductase pathway; glycine from L-threonine: step 1/2. Catalyzes the NAD(+)-dependent oxidation of L-threonine to 2-amino-3-ketobutyrate. In Pseudoalteromonas atlantica (strain T6c / ATCC BAA-1087), this protein is L-threonine 3-dehydrogenase.